The primary structure comprises 156 residues: ATP synthase subunit b (156 aa).

The chain crosses the membrane as a helical span at residues 12-32 (VAFLIFVLFCMKFVWPPVIAA).

It belongs to the ATPase B chain family. In terms of assembly, F-type ATPases have 2 components, F(1) - the catalytic core - and F(0) - the membrane proton channel. F(1) has five subunits: alpha(3), beta(3), gamma(1), delta(1), epsilon(1). F(0) has three main subunits: a(1), b(2) and c(10-14). The alpha and beta chains form an alternating ring which encloses part of the gamma chain. F(1) is attached to F(0) by a central stalk formed by the gamma and epsilon chains, while a peripheral stalk is formed by the delta and b chains.

Its subcellular location is the cell inner membrane. Its function is as follows. F(1)F(0) ATP synthase produces ATP from ADP in the presence of a proton or sodium gradient. F-type ATPases consist of two structural domains, F(1) containing the extramembraneous catalytic core and F(0) containing the membrane proton channel, linked together by a central stalk and a peripheral stalk. During catalysis, ATP synthesis in the catalytic domain of F(1) is coupled via a rotary mechanism of the central stalk subunits to proton translocation. Component of the F(0) channel, it forms part of the peripheral stalk, linking F(1) to F(0). This chain is ATP synthase subunit b, found in Pseudomonas fluorescens (strain Pf0-1).